A 348-amino-acid chain; its full sequence is S-adenosylmethionine:tRNA ribosyltransferase-isomerase (348 aa).

Belongs to the QueA family. As to quaternary structure, monomer.

Its subcellular location is the cytoplasm. The catalysed reaction is 7-aminomethyl-7-carbaguanosine(34) in tRNA + S-adenosyl-L-methionine = epoxyqueuosine(34) in tRNA + adenine + L-methionine + 2 H(+). The protein operates within tRNA modification; tRNA-queuosine biosynthesis. Its function is as follows. Transfers and isomerizes the ribose moiety from AdoMet to the 7-aminomethyl group of 7-deazaguanine (preQ1-tRNA) to give epoxyqueuosine (oQ-tRNA). This chain is S-adenosylmethionine:tRNA ribosyltransferase-isomerase, found in Tolumonas auensis (strain DSM 9187 / NBRC 110442 / TA 4).